We begin with the raw amino-acid sequence, 858 residues long: MDTSSAAGSGAGTGDVCPCSTVATSTTSASNEQPQTKRQKIEQQIKVGSKALPPQPPHPPDILDLDANSNSHLCSSLSSSSSHSLSTPSTANNSPTTTPCSSRAASYAQLLHNILPQNGDTDLHSQPESAHDEVDRAAKLPNLLTLDTTNGNGSHASSRSNCLQATTATSIDDMLEFEQSLTRQCLCGVSERTLRKPFQSHYSQDTNGQKRIAYLREWPTNKLLQFLSNLQLLFDIYLKQNAKGFICTRIMDVCDALIRNDHKLIDEIIVLAGYENSYVQFLAGRVLAAFLVIAKQELNDEWLQKIVDQLFNFEQLDQAAVQKIHFSLDIIKRIVEWKDMEIHPLDDDWMASANSTSAASSVVPLSTEASVSYMHFPVQEQPLATNYFALQFREDTEGERETGQEAPDNRDRHRRHFGEDMNVAYEPHPAPQSTTMPSGCHVVTLTDSESFDTTHLKCITIQKLEHKWPTLVKNMSELMAPTHQDAAEHCVLNFLQLWENIISVKANLSIDETRPYYAQLDKFELLLSHSLSCTVYKQMLCLFNEALCYGSTLALQDMLPEETCKLAHQIVCHVRGFRILESLPRRQPDNMVSLIGYNGKPMVYANGTITLAHAAQSGDSEEDGAPLDLIEMDKTLLQKMVLLVLKSIAVTVKEIRSDSSDSSIDSTDYDAFQDMMLIERSIRDVLSKLETFIKQTLEFHPECHFSKILIHLFDDQDDHLIEAMVCTLDVTSGISFRNNAFPELVAMLNPVYTFLEFLKMTSNSSDLLLDLLVSNETCFLLYLLRLLKYIRMNWTMFVHSCHTFGMGSAMLDEAMGVLIRLRLQISRLVSRQLYPYDISPVLRLLESCESLYEGNELS.

A disordered region spans residues M1–S102. Low complexity-rich tracts occupy residues S20 to S30 and L65 to S102.

It belongs to the protein lines family. As to quaternary structure, interacts with drm. Expressed throughout the embryo, including the hindgut, posterior midgut and embryonic epidermis.

Its subcellular location is the cytoplasm. It is found in the nucleus. Its function is as follows. Has a dual role as a segment polarity protein and as a modulator of the Abd-B protein. Required for Abd-B to activate the transcription of genes (including ems, cut and sal) that are involved in posterior spiracle morphogenesis. Also required for Abd-B to form an eighth abdominal denticle belt. Acts in a hierarchy downstream of drm and upstream of bowl during foregut and hindgut patterning and morphogenesis. Involved in cell rearrangement during elongation of the embryonic hindgut. Required to regulate expression of embryonic hindgut patterning genes in order to establish the large intestine and at least some rectum, and to repress small intestine fate. Required for late wingless (wg)-dependent cell fate specification in the dorsal embryonic epidermis. Acts in concert with wg to regulate expression of wg itself and also to regulate wg-target genes. May have a role in ventral epidermal patterning, independent of wg signaling. This chain is Protein lines, found in Drosophila melanogaster (Fruit fly).